Reading from the N-terminus, the 150-residue chain is UPF0756 membrane protein ABAYE1440 (150 aa).

Transmembrane regions (helical) follow at residues 1–21 (MLAQ…CGLL), 45–65 (FFPY…TIGV), 83–103 (FISF…WLGG), and 115–135 (VVAG…GVPV).

This sequence belongs to the UPF0756 family.

It localises to the cell membrane. This Acinetobacter baumannii (strain AYE) protein is UPF0756 membrane protein ABAYE1440.